Reading from the N-terminus, the 492-residue chain is Alpha/beta hydrolase ucsC (492 aa).

S258 (nucleophile) is an active-site residue.

The protein belongs to the AB hydrolase superfamily. FUS2 hydrolase family. In terms of assembly, homodimer.

Its pathway is mycotoxin biosynthesis. In terms of biological role, alpha/beta hydrolase; part of the gene cluster that mediates the biosynthesis of UCS1025A, a member of the pyrrolizidinone family that acts as a strong telomerase inhibitor and displays potent antibacterial and antitumor properties. These compounds share a hemiaminal-containing pyrrolizidinone core fused with a gamma-lactone, giving a furopyrrolizidine that is connected to a decalin fragment. The polyketide synthase module (PKS) of the PKS-NRPS ucsA is responsible for the synthesis of the polyketide backbone via the condensation of an acetyl-CoA starter unit with 6 malonyl-CoA units. The downstream nonribosomal peptide synthetase (NRPS) module then amidates the carboxyl end of the polyketide with a 2S,3S-methylproline derived from L-isoleucine by the 2-oxoglutarate-dependent dioxygenase ucsF which converts L-isoleucine to (4S,5S)-4-methylpyrroline-5-carboxylate that is further converted to 2S,3S-methylproline by the pyrroline-5-carboxylate reductase ucsG. Reductive release of the completed aminoacyl polyketide from the assembly line can form the 3-pyrrolin-2-one structure via an intramolecular Knoevenagel reaction. Because ucsA lacks a designated enoylreductase (ER) domain, the required activity is provided the enoyl reductase ucsL. This keto acyclic precursor is the substrate of the Diels-Alderase ucsH, that catalyzes the Diels-Alder cycloaddition. Oxidation of the 3S-methyl group to a carboxylate by the cytochrome P450 monooxygenase ucsK allows an oxa-Michael cyclization that might involve the reductase/dehydrogenase ucsI and which furnishes the furopyrrolizidine. The oxidase ucsJ likely plays a critical role in stereoselective reduction of the C5-C6 double bond to afford the required R-configured carboxylate group. Further enolization and oxidation at C5 by an unidentified enzyme affords the last intermediate that can undergo oxa-Michael cyclization to yield UCS1025A. The polypeptide is Alpha/beta hydrolase ucsC (Acremonium sp).